A 702-amino-acid polypeptide reads, in one-letter code: Polyribonucleotide nucleotidyltransferase (702 aa).

Aspartate 486 and aspartate 492 together coordinate Mg(2+). Residues 553–612 (PSMATIKIDPEKIRDVIGKGGATIRSITEQTGASIDLDDDGTVRIYAADKASSDAALLKI) form the KH domain. The S1 motif domain maps to 622-690 (DKLYKGKVVR…ARGRIKLSMK (69 aa)).

Belongs to the polyribonucleotide nucleotidyltransferase family. As to quaternary structure, component of the RNA degradosome, which is a multiprotein complex involved in RNA processing and mRNA degradation. Mg(2+) is required as a cofactor.

The protein localises to the cytoplasm. It catalyses the reaction RNA(n+1) + phosphate = RNA(n) + a ribonucleoside 5'-diphosphate. Involved in mRNA degradation. Catalyzes the phosphorolysis of single-stranded polyribonucleotides processively in the 3'- to 5'-direction. The chain is Polyribonucleotide nucleotidyltransferase from Marinomonas sp. (strain MWYL1).